The chain runs to 526 residues: Cell adhesion molecule CEACAM1 (526 aa).

The first 34 residues, 1-34 (MGHLSAPLHRVRVPWQGLLLTASLLTFWNPPTTA), serve as a signal peptide directing secretion. Residue Gln35 is modified to Pyrrolidone carboxylic acid. The region spanning 35-142 (QLTTESMPFN…EATGQFHVYP (108 aa)) is the Ig-like V-type domain. Topologically, residues 35 to 428 (QLTTESMPFN…LPQENGLSPG (394 aa)) are extracellular. The interval 39 to 142 (ESMPFNVAEG…EATGQFHVYP (104 aa)) is required for homophilic binding. N-linked (GlcNAc...) asparagine glycosylation is found at Asn104, Asn111, Asn115, Asn152, Asn182, Asn197, Asn208, Asn224, Asn232, Asn254, Asn274, Asn288, Asn292, Asn302, Asn309, Asn345, Asn351, Asn363, Asn378, and Asn405. 3 consecutive Ig-like C2-type domains span residues 145–232 (PKPS…VTLN), 237–317 (PDTP…KTII), and 323–413 (PVVA…IMLN). Cys167 and Cys215 are disulfide-bonded. A disulfide bridge links Cys259 with Cys299. A disulfide bridge connects residues Cys348 and Cys396. The helical transmembrane segment at 429-452 (AIAGIVIGVVALVALIAVALACFL) threads the bilayer. Residues 450-462 (CFLHFGKTGRASD) form an interaction with calmodulin region. The interval 452-526 (LHFGKTGRAS…EIIYSEVKKQ (75 aa)) is interaction with FLNA. Residues 453-526 (HFGKTGRASD…EIIYSEVKKQ (74 aa)) are Cytoplasmic-facing. A compositionally biased stretch (basic and acidic residues) spans 461–482 (SDQRDLTEHKPSVSNHTQDHSN). A disordered region spans residues 461 to 513 (SDQRDLTEHKPSVSNHTQDHSNDPPNKMNEVTYSTLNFEAQQPTQPTSASPSL). The span at 489-513 (NEVTYSTLNFEAQQPTQPTSASPSL) shows a compositional bias: polar residues. The interval 489 to 526 (NEVTYSTLNFEAQQPTQPTSASPSLTATEIIYSEVKKQ) is required for interaction with PTPN11 and PTPN6 and for control of phosphorylation level. A Phosphotyrosine; by SRC, LCK, INSR and EGFR modification is found at Tyr493. Phosphoserine is present on Ser508. The residue at position 520 (Tyr520) is a Phosphotyrosine; by INSR, SRC and LCK. Residues 520 to 523 (YSEV) are essential for interaction with PTPN11 and PTPN6.

This sequence belongs to the immunoglobulin superfamily. CEA family. As to quaternary structure, monomer. Oligomer. Heterodimer. Homodimer. Cis-dimer/oligomer (via Ig-like C2-type and/or via cytoplasmic domains); induced by trans-homophilic cell adhesion through an allosteric mechanism transmitted by the Ig-like V-type domain, and is regulated by intracellular calcium and calmodulin. Interacts (via cytoplasmic domain) with calmodulin in a calcium dependent manner; reduces homophilic cell adhesion through dissociation of dimer. Isoform 1 interacts (via cytoplasmic domain) with PTPN11 (preferentially) and PTPN6; cis-homodimer form is preferred; this interaction is decreased by formation of Isoform 1 /Isoform 8 cis-heterodimers and is dependent on the monomer/dimer equilibrium; this interaction is phosphorylation-dependent. Isoform 1 interacts with LYN. Isoform 1 interacts (via cytoplasmic domain) with SRC (via SH2 domain); this interaction is regulated by trans-homophilic cell adhesion. Isoform 1 interacts (via cytoplasmic domain) with LCK; mediates phosphorylation at Tyr-493 and Tyr-520 resulting in PTPN6 association. Isoform 1 interacts with PTPN6; this interaction is phosphorylation-dependent and causes a profound decrease in TCR stimulation-induced CD247 and ZAP70 phosphorylation. Isoform 1 interacts with TCR/CD3 complex through TCR beta chain and CD3E; colocalizes at the cell surface and upon stimulation of the TCR/CD3 complex recruits PTPN6 in the TCR/CD3 complex, resulting in dephosphorylation of CD247 and ZAP70. Isoform 1 interacts (via cytoplasmic domain) with SHC1 (via SH2 domain); SHC1 mediates interaction with INSR or EGFR in a Ser-508 phosphorylation-dependent manner. Isoform 1 interacts with EGFR; the interaction is indirect. Isoform 1 interacts with CSF3R; down-regulates the CSF3R-STAT3 pathway through recruitment of PTPN6 that dephosphorylates CSF3R. Isoform 1 (phosphorylated form) interacts with TLR4 and SYK; recruits PTPN6 that dephosphorylates SYK, reducing the production of reactive oxygen species (ROS) and lysosome disruption, leading to a reduction of the inflammasome activity. Isoform 1 interacts with FLNA; inhibits cell migration and cell scattering by interfering with the interaction of FLNA with RALA. Isoform 1 interacts (via cytoplasmic domain) with PXN; the interaction is phosphotyrosyl-dependent. Isoform 1 interacts with KLRK1; recruits PTPN6 that dephosphorylates VAV1. Isoform 1 interacts with CEACAM8. Isoform 1 interacts with FASN; this interaction is insulin and phosphorylation-dependent; reduces fatty-acid synthase activity. Interacts (via Ig-like V-type) with HAVCR2 (via Ig-like V-type); facilitates the maturation and cell surface expression of HAVCR2 thereby regulating T cell tolerance induction. Isoform 8 interacts (via the cytoplasmic domain) with ANXA2; this interaction is regulated by phosphorylation and appears in the AIIt complex. Interacts (via Lewis X moieties) with CD209 (via C-type lectin domain); this interaction is regulated by the glycosylation pattern of CEACAM1 on cell types and regulates contact between dendritic cells and neutrophils. Phosphorylated on serine and tyrosine. Isoform 1 is phosphorylated on tyrosine by Src family kinases like SRC and LCK and by receptor like CSF3R, EGFR and INSR upon stimulation. Phosphorylated at Ser-508; mediates activity. Phosphorylated at Tyr-493; regulates activity. Phosphorylated at Tyr-493 by EGFR and INSR upon stimulation; this phosphorylation is Ser-508-phosphorylation-dependent; mediates cellular internalization; increases interaction with downstream proteins like SHC1 and FASN. Phosphorylated at Tyr-493 and Tyr-520 by LCK; mediates PTPN6 association and is regulated by homophilic ligation of CEACAM1 in the absence of T cell activation. Phosphorylated at Tyr-520; mediates interaction with PTPN11. Post-translationally, phosphorylated on serine and threonine. In terms of tissue distribution, expressed in columnar epithelial cells of the colon (at protein level). The predominant forms expressed by T cells are those containing a long cytoplasmic domain. Expressed in granulocytes and lymphocytes. Leukocytes only express isoforms 6 and isoform 1.

The protein localises to the cell membrane. The protein resides in the lateral cell membrane. It localises to the apical cell membrane. It is found in the basal cell membrane. Its subcellular location is the cell junction. The protein localises to the adherens junction. The protein resides in the secreted. It localises to the cytoplasmic vesicle. It is found in the secretory vesicle membrane. Its subcellular location is the cell projection. The protein localises to the microvillus membrane. Cell adhesion protein that mediates homophilic cell adhesion in a calcium-independent manner. Plays a role as coinhibitory receptor in immune response, insulin action and also functions as an activator during angiogenesis. Its coinhibitory receptor function is phosphorylation- and PTPN6 -dependent, which in turn, suppress signal transduction of associated receptors by dephosphorylation of their downstream effectors. Plays a role in immune response, of T cells, natural killer (NK) and neutrophils. Upon TCR/CD3 complex stimulation, inhibits TCR-mediated cytotoxicity by blocking granule exocytosis by mediating homophilic binding to adjacent cells, allowing interaction with and phosphorylation by LCK and interaction with the TCR/CD3 complex which recruits PTPN6 resulting in dephosphorylation of CD247 and ZAP70. Also inhibits T cell proliferation and cytokine production through inhibition of JNK cascade and plays a crucial role in regulating autoimmunity and anti-tumor immunity by inhibiting T cell through its interaction with HAVCR2. Upon natural killer (NK) cells activation, inhibit KLRK1-mediated cytolysis of CEACAM1-bearing tumor cells by trans-homophilic interactions with CEACAM1 on the target cell and lead to cis-interaction between CEACAM1 and KLRK1, allowing PTPN6 recruitment and then VAV1 dephosphorylation. Upon neutrophils activation negatively regulates IL1B production by recruiting PTPN6 to a SYK-TLR4-CEACAM1 complex, that dephosphorylates SYK, reducing the production of reactive oxygen species (ROS) and lysosome disruption, which in turn, reduces the activity of the inflammasome. Down-regulates neutrophil production by acting as a coinhibitory receptor for CSF3R by down-regulating the CSF3R-STAT3 pathway through recruitment of PTPN6 that dephosphorylates CSF3R. Also regulates insulin action by promoting INS clearance and regulating lipogenesis in liver through regulating insulin signaling. Upon INS stimulation, undergoes phosphorylation by INSR leading to INS clearance by increasing receptor-mediated insulin endocytosis. This inernalization promotes interaction with FASN leading to receptor-mediated insulin degradation and to reduction of FASN activity leading to negative regulation of fatty acid synthesis. INSR-mediated phosphorylation also provokes a down-regulation of cell proliferation through SHC1 interaction resulting in decrease coupling of SHC1 to the MAPK3/ERK1-MAPK1/ERK2 and phosphatidylinositol 3-kinase pathways. Functions as activator in angiogenesis by promoting blood vessel remodeling through endothelial cell differentiation and migration and in arteriogenesis by increasing the number of collateral arteries and collateral vessel calibers after ischemia. Also regulates vascular permeability through the VEGFR2 signaling pathway resulting in control of nitric oxide production. Down-regulates cell growth in response to EGF through its interaction with SHC1 that mediates interaction with EGFR resulting in decrease coupling of SHC1 to the MAPK3/ERK1-MAPK1/ERK2 pathway. Negatively regulates platelet aggregation by decreasing platelet adhesion on type I collagen through the GPVI-FcRgamma complex. Inhibits cell migration and cell scattering through interaction with FLNA; interferes with the interaction of FLNA with RALA. Mediates bile acid transport activity in a phosphorylation dependent manner. Negatively regulates osteoclastogenesis. In terms of biological role, cell adhesion protein that mediates homophilic cell adhesion in a calcium-independent manner. Promotes populations of T cells regulating IgA production and secretion associated with control of the commensal microbiota and resistance to enteropathogens. In Homo sapiens (Human), this protein is Cell adhesion molecule CEACAM1.